The primary structure comprises 109 residues: Thiosulfate sulfurtransferase GlpE (109 aa).

The region spanning 17-105 is the Rhodanese domain; it reads HQQTAVLVDI…WHRHFPAEVA (89 aa). Residue Cys65 is the Cysteine persulfide intermediate of the active site.

It belongs to the GlpE family.

Its subcellular location is the cytoplasm. The catalysed reaction is thiosulfate + hydrogen cyanide = thiocyanate + sulfite + 2 H(+). The enzyme catalyses thiosulfate + [thioredoxin]-dithiol = [thioredoxin]-disulfide + hydrogen sulfide + sulfite + 2 H(+). Transferase that catalyzes the transfer of sulfur from thiosulfate to thiophilic acceptors such as cyanide or dithiols. May function in a CysM-independent thiosulfate assimilation pathway by catalyzing the conversion of thiosulfate to sulfite, which can then be used for L-cysteine biosynthesis. The chain is Thiosulfate sulfurtransferase GlpE from Klebsiella pneumoniae subsp. pneumoniae (strain ATCC 700721 / MGH 78578).